A 159-amino-acid polypeptide reads, in one-letter code: MRITVVCVGKIKEKFYTQAVDEYSKRLSRYCKLDIVELPDEKTPDNASDVVNEQIKNKEGERILSAIKDDAYVCALAIEGKMLDSVELSEKIDRLGIDGTSNITFVIGGSLGLADAVLKRADYKLSFSKMTFPHQLMRVILLEQIYRAYRIMKNEPYHK.

S-adenosyl-L-methionine is bound by residues Leu-76, Gly-108, and 127 to 132; that span reads FSKMTF.

It belongs to the RNA methyltransferase RlmH family. As to quaternary structure, homodimer.

It is found in the cytoplasm. It catalyses the reaction pseudouridine(1915) in 23S rRNA + S-adenosyl-L-methionine = N(3)-methylpseudouridine(1915) in 23S rRNA + S-adenosyl-L-homocysteine + H(+). Functionally, specifically methylates the pseudouridine at position 1915 (m3Psi1915) in 23S rRNA. The protein is Ribosomal RNA large subunit methyltransferase H of Lachnospira eligens (strain ATCC 27750 / DSM 3376 / VPI C15-48 / C15-B4) (Eubacterium eligens).